The primary structure comprises 696 residues: SEC14 domain and spectrin repeat-containing protein 1 (696 aa).

The CRAL-TRIO domain occupies 1-153; sequence MDATVILPIL…EFGGSLTYDH (153 aa). 3 Spectrin repeats span residues 272–378, 381–494, and 500–602; these read TQLD…NLLQ, LDFH…LKML, and FKCE…HRLE.

It belongs to the SOLO family.

Its function is as follows. May act as the primary docking protein directing membrane turnover and assembly of the transient receptor potential channels trpc4 and trpc5. Binds phospholipids. This chain is SEC14 domain and spectrin repeat-containing protein 1 (sestd1), found in Xenopus tropicalis (Western clawed frog).